The following is a 338-amino-acid chain: Flap endonuclease 1 (338 aa).

Residues 1-98 (MGTDIGDLLQ…ETLSRRKEVR (98 aa)) are N-domain. Mg(2+) contacts are provided by aspartate 27, aspartate 80, glutamate 152, glutamate 154, aspartate 173, aspartate 175, and aspartate 236. Residues 116 to 257 (AAYKYAQASS…TALKLIKKHG (142 aa)) form an I-domain region. The tract at residues 330 to 338 (RQKTLDQWF) is interaction with PCNA.

The protein belongs to the XPG/RAD2 endonuclease family. FEN1 subfamily. Interacts with PCNA. PCNA stimulates the nuclease activity without altering cleavage specificity. Requires Mg(2+) as cofactor.

In terms of biological role, structure-specific nuclease with 5'-flap endonuclease and 5'-3' exonuclease activities involved in DNA replication and repair. During DNA replication, cleaves the 5'-overhanging flap structure that is generated by displacement synthesis when DNA polymerase encounters the 5'-end of a downstream Okazaki fragment. Binds the unpaired 3'-DNA end and kinks the DNA to facilitate 5' cleavage specificity. Cleaves one nucleotide into the double-stranded DNA from the junction in flap DNA, leaving a nick for ligation. Also involved in the base excision repair (BER) pathway. Acts as a genome stabilization factor that prevents flaps from equilibrating into structures that lead to duplications and deletions. Also possesses 5'-3' exonuclease activity on nicked or gapped double-stranded DNA. This Methanosarcina acetivorans (strain ATCC 35395 / DSM 2834 / JCM 12185 / C2A) protein is Flap endonuclease 1.